We begin with the raw amino-acid sequence, 424 residues long: Dihydroorotase (424 aa).

2 residues coordinate Zn(2+): His60 and His62. Substrate contacts are provided by residues His62 to Arg64 and Asn94. Zn(2+) contacts are provided by Asp151, His178, and His231. Asn277 is a substrate binding site. Residue Asp304 coordinates Zn(2+). The active site involves Asp304. His308 is a substrate binding site.

It belongs to the metallo-dependent hydrolases superfamily. DHOase family. Class I DHOase subfamily. Zn(2+) serves as cofactor.

It carries out the reaction (S)-dihydroorotate + H2O = N-carbamoyl-L-aspartate + H(+). The protein operates within pyrimidine metabolism; UMP biosynthesis via de novo pathway; (S)-dihydroorotate from bicarbonate: step 3/3. Its function is as follows. Catalyzes the reversible cyclization of carbamoyl aspartate to dihydroorotate. The polypeptide is Dihydroorotase (Clostridium acetobutylicum (strain ATCC 824 / DSM 792 / JCM 1419 / IAM 19013 / LMG 5710 / NBRC 13948 / NRRL B-527 / VKM B-1787 / 2291 / W)).